The following is a 340-amino-acid chain: Phosphoribosylformylglycinamidine cyclo-ligase (340 aa).

This sequence belongs to the AIR synthase family.

It is found in the cytoplasm. The enzyme catalyses 2-formamido-N(1)-(5-O-phospho-beta-D-ribosyl)acetamidine + ATP = 5-amino-1-(5-phospho-beta-D-ribosyl)imidazole + ADP + phosphate + H(+). Its pathway is purine metabolism; IMP biosynthesis via de novo pathway; 5-amino-1-(5-phospho-D-ribosyl)imidazole from N(2)-formyl-N(1)-(5-phospho-D-ribosyl)glycinamide: step 2/2. In Streptococcus gordonii (strain Challis / ATCC 35105 / BCRC 15272 / CH1 / DL1 / V288), this protein is Phosphoribosylformylglycinamidine cyclo-ligase.